We begin with the raw amino-acid sequence, 263 residues long: MVSWIICKAVVLVFGMLYPAYFSYKAVRTKNVKEYVRWMMYWIVFALYTVTEAIADLTLSWFPLYYELKIAFVVWLLSPYTRGASLLYRKFLHPLLSSKEKEIDDYIVQAKEKGYETMVHFGKQGLNLAANAAVTAAVKGQGAITERLRSFSMHDLTAVQGDETSENRPFATFPDGQKKARASVSDSSGFGSLRKDSGDDNTDEDVEVNSEDEVYTQKGLRRSQSMRSVKVIKGRKEIRYASLKHKPKKRPQLYFREDTAHHL.

2 helical membrane passes run 2 to 22 (VSWI…PAYF) and 35 to 55 (YVRW…EAIA). Disordered regions lie at residues 161 to 228 (GDET…SMRS) and 240 to 263 (YASL…AHHL). Residues 199–214 (DDNTDEDVEVNSEDEV) are compositionally biased toward acidic residues. Positions 242 to 251 (SLKHKPKKRP) are enriched in basic residues.

Belongs to the DP1 family.

It is found in the endoplasmic reticulum membrane. Its function is as follows. Microtubule-binding protein required to ensure proper cell division and nuclear envelope reassembly by sequestering the endoplasmic reticulum away from chromosomes during mitosis. Probably acts by clearing the endoplasmic reticulum membrane from metaphase chromosomes. This is Receptor expression-enhancing protein 3-A (reep3-a) from Xenopus laevis (African clawed frog).